Reading from the N-terminus, the 281-residue chain is NADPH-dependent 7-cyano-7-deazaguanine reductase (281 aa).

88–90 (IES) is a binding site for substrate. 90–91 (SK) contributes to the NADPH binding site. Residue Cys-189 is the Thioimide intermediate of the active site. Residue Asp-196 is the Proton donor of the active site. 228–229 (HE) lines the substrate pocket. Residue 257 to 258 (RG) participates in NADPH binding.

This sequence belongs to the GTP cyclohydrolase I family. QueF type 2 subfamily. Homodimer.

It localises to the cytoplasm. The catalysed reaction is 7-aminomethyl-7-carbaguanine + 2 NADP(+) = 7-cyano-7-deazaguanine + 2 NADPH + 3 H(+). It functions in the pathway tRNA modification; tRNA-queuosine biosynthesis. Functionally, catalyzes the NADPH-dependent reduction of 7-cyano-7-deazaguanine (preQ0) to 7-aminomethyl-7-deazaguanine (preQ1). This is NADPH-dependent 7-cyano-7-deazaguanine reductase from Proteus mirabilis (strain HI4320).